The sequence spans 334 residues: Protein-methionine-sulfoxide reductase catalytic subunit MsrP (334 aa).

Positions 1–44 form a signal peptide, tat-type signal; sequence MKKKQFLKESDVTAESVFFMKRRQVLKALGISAAALSLPHAAHA. Mo-molybdopterin contacts are provided by residues asparagine 88, 91 to 92, cysteine 146, threonine 181, asparagine 233, arginine 238, and 249 to 251; these read YE and GIK.

It belongs to the MsrP family. In terms of assembly, heterodimer of a catalytic subunit (MsrP) and a heme-binding subunit (MsrQ). Mo-molybdopterin serves as cofactor. In terms of processing, predicted to be exported by the Tat system. The position of the signal peptide cleavage has not been experimentally proven.

Its subcellular location is the periplasm. It carries out the reaction L-methionyl-[protein] + a quinone + H2O = L-methionyl-(S)-S-oxide-[protein] + a quinol. It catalyses the reaction L-methionyl-[protein] + a quinone + H2O = L-methionyl-(R)-S-oxide-[protein] + a quinol. Part of the MsrPQ system that repairs oxidized periplasmic proteins containing methionine sulfoxide residues (Met-O), using respiratory chain electrons. Thus protects these proteins from oxidative-stress damage caused by reactive species of oxygen and chlorine generated by the host defense mechanisms. MsrPQ is essential for the maintenance of envelope integrity under bleach stress, rescuing a wide series of structurally unrelated periplasmic proteins from methionine oxidation, including the primary periplasmic chaperone SurA and the lipoprotein Pal. The catalytic subunit MsrP is non-stereospecific, being able to reduce both (R-) and (S-) diastereoisomers of methionine sulfoxide. This Escherichia coli O139:H28 (strain E24377A / ETEC) protein is Protein-methionine-sulfoxide reductase catalytic subunit MsrP.